A 124-amino-acid polypeptide reads, in one-letter code: Histone H2A (124 aa).

The span at 1 to 18 (MSGRGKSGKARTKAKSRS) shows a compositional bias: basic residues. Residues 1–21 (MSGRGKSGKARTKAKSRSSRA) are disordered. S2 carries the post-translational modification N-acetylserine. At S2 the chain carries Phosphoserine. The residue at position 104 (Q104) is an N5-methylglutamine. Residue K119 forms a Glycyl lysine isopeptide (Lys-Gly) (interchain with G-Cter in ubiquitin) linkage.

Belongs to the histone H2A family. As to quaternary structure, the nucleosome is a histone octamer containing two molecules each of H2A, H2B, H3 and H4 assembled in one H3-H4 heterotetramer and two H2A-H2B heterodimers. The octamer wraps approximately 147 bp of DNA. In terms of processing, monoubiquitination of Lys-119 gives a specific tag for epigenetic transcriptional repression. Post-translationally, phosphorylation of Ser-2 directly represses transcription.

It localises to the nucleus. The protein localises to the chromosome. Core component of nucleosome. Nucleosomes wrap and compact DNA into chromatin, limiting DNA accessibility to the cellular machineries which require DNA as a template. Histones thereby play a central role in transcription regulation, DNA repair, DNA replication and chromosomal stability. DNA accessibility is regulated via a complex set of post-translational modifications of histones, also called histone code, and nucleosome remodeling. This Paracentrotus lividus (Common sea urchin) protein is Histone H2A.